The following is a 268-amino-acid chain: tRNA pseudouridine synthase A (268 aa).

The active-site Nucleophile is D52. Residue Y110 participates in substrate binding.

The protein belongs to the tRNA pseudouridine synthase TruA family. As to quaternary structure, homodimer.

The catalysed reaction is uridine(38/39/40) in tRNA = pseudouridine(38/39/40) in tRNA. Its function is as follows. Formation of pseudouridine at positions 38, 39 and 40 in the anticodon stem and loop of transfer RNAs. The protein is tRNA pseudouridine synthase A of Prochlorococcus marinus subsp. pastoris (strain CCMP1986 / NIES-2087 / MED4).